The chain runs to 109 residues: Oncomodulin-2 (109 aa).

EF-hand domains lie at 39–74 and 78–109; these read MSAS…FESG and LTES…MVHS. Ca(2+) is bound by residues Asp52, Asp54, Ser56, Tyr58, Glu63, Asp91, Asp93, Asp95, Lys97, and Glu102.

The protein belongs to the parvalbumin family.

This Homo sapiens (Human) protein is Oncomodulin-2 (OCM2).